The primary structure comprises 107 residues: Large ribosomal subunit protein P1 (107 aa).

Positions P67–S82 are enriched in low complexity. Residues P67–D107 form a disordered region. Residues G83–E92 are compositionally biased toward basic and acidic residues.

It belongs to the eukaryotic ribosomal protein P1/P2 family. P1 and P2 exist as dimers at the large ribosomal subunit.

Its function is as follows. Plays an important role in the elongation step of protein synthesis. The chain is Large ribosomal subunit protein P1 from Leishmania peruviana.